The primary structure comprises 42 residues: Potassium channel toxin gamma-KTx 3.4 (42 aa).

4 disulfide bridges follow: Cys-5–Cys-23, Cys-11–Cys-34, Cys-20–Cys-39, and Cys-24–Cys-41.

The protein belongs to the ergtoxin family. Gamma-KTx 3 subfamily. Expressed by the venom gland.

The protein localises to the secreted. Its function is as follows. Blocks Kv11/ERG potassium channels. In Centruroides gracilis (Slenderbrown scorpion), this protein is Potassium channel toxin gamma-KTx 3.4.